Consider the following 307-residue polypeptide: MWFKNLYFFAFTRPFEWSEQDLEKHLSEHLFTPLGSTEISHFGWINALGKHGDTSVHSANGNFLICARKEEKMLPASVIKDMIEEKVNLLEQEQGRGATKKEKEQFKEDITFELLPRAFSRITDTHAYISPVNNIIVINSSSRGKAEDLLALLRKVLGTLPVSSLEPDVCADETMTDWLNEKSLGGKFTLGMEAEFNALGDDGAVVRVKNQDLLSEEIKSHLDADKYVVKVALEWDESLSFILCDDLAIKRVKFFDVIHEQNDDIDSDDVIAKLDADFALMSGELNRFIIELLAEFSMKTTDLLEKD.

It belongs to the RdgC family.

Its subcellular location is the cytoplasm. It localises to the nucleoid. May be involved in recombination. This Colwellia psychrerythraea (strain 34H / ATCC BAA-681) (Vibrio psychroerythus) protein is Recombination-associated protein RdgC.